Consider the following 820-residue polypeptide: DNA mismatch repair protein MutS (820 aa).

Glycine 618–serine 625 is a binding site for ATP.

The protein belongs to the DNA mismatch repair MutS family.

This protein is involved in the repair of mismatches in DNA. It is possible that it carries out the mismatch recognition step. This protein has a weak ATPase activity. This is DNA mismatch repair protein MutS from Chlamydia trachomatis serovar A (strain ATCC VR-571B / DSM 19440 / HAR-13).